The primary structure comprises 585 residues: Glutamate decarboxylase 2 (585 aa).

Residues 1 to 14 show a composition bias toward low complexity; the sequence is MASPGSGFWSFGSE. The interval 1 to 24 is disordered; the sequence is MASPGSGFWSFGSEDGSGDSENPG. Phosphoserine is present on residues serine 3, serine 6, serine 10, and serine 13. Residues cysteine 30 and cysteine 45 are each lipidated (S-palmitoyl cysteine). 181–183 lines the substrate pocket; sequence QLS. Position 396 is an N6-(pyridoxal phosphate)lysine (lysine 396). Arginine 558 lines the substrate pocket.

The protein belongs to the group II decarboxylase family. Homodimer. Pyridoxal 5'-phosphate serves as cofactor. Phosphorylated; which does not affect kinetic parameters or subcellular location. In terms of processing, palmitoylated; which is required for presynaptic clustering.

The protein localises to the cytoplasm. Its subcellular location is the cytosol. It localises to the cytoplasmic vesicle. It is found in the presynaptic cell membrane. The protein resides in the golgi apparatus membrane. The enzyme catalyses L-glutamate + H(+) = 4-aminobutanoate + CO2. Catalyzes the production of GABA. The sequence is that of Glutamate decarboxylase 2 from Homo sapiens (Human).